Here is a 153-residue protein sequence, read N- to C-terminus: Regulatory protein RecX (153 aa).

The protein belongs to the RecX family.

The protein localises to the cytoplasm. Its function is as follows. Modulates RecA activity. The sequence is that of Regulatory protein RecX from Syntrophotalea carbinolica (strain DSM 2380 / NBRC 103641 / GraBd1) (Pelobacter carbinolicus).